The primary structure comprises 459 residues: Paired box protein Pax-8 (459 aa).

Positions 9-135 (GHGGLNQLGG…SSINRIIRTK (127 aa)) form a DNA-binding region, paired. Residues 12 to 68 (GLNQLGGAFVNGRPLPEVVRQRIVDLAHQGVRPCDISRQLRVSHGCVSKILGRYYET) form a PAI subdomain region. Residues 87 to 135 (KVVEKIGDYKRQNPTMFAWEIRDRLLAEGVCDNDTVPSVSSINRIIRTK) are RED subdomain. Residues 159 to 182 (LIPSSAVTPPESPQSDSLGSTYSI) show a composition bias toward polar residues. Residues 159 to 223 (LIPSSAVTPP…QSSSSGPRKH (65 aa)) form a disordered region. S305 bears the Phosphoserine mark.

Interacts with WWTR1.

The protein resides in the nucleus. Functionally, thought to encode a transcription factor. It may have a role in kidney cell differentiation. May play a regulatory role in mammalian development. This is Paired box protein Pax-8 (PAX8) from Canis lupus familiaris (Dog).